Here is a 336-residue protein sequence, read N- to C-terminus: Nucleoid-associated protein Spro_3255 (336 aa).

It belongs to the YejK family.

The protein resides in the cytoplasm. The protein localises to the nucleoid. The protein is Nucleoid-associated protein Spro_3255 of Serratia proteamaculans (strain 568).